The following is a 258-amino-acid chain: Probable phthiotriol/phenolphthiotriol dimycocerosates methyltransferase 2 (258 aa).

This sequence belongs to the methyltransferase superfamily. Phthiotriol/phenolphthiotriol dimycocerosates methyltransferase family.

Catalyzes the methylation of the lipid moiety of the intermediate compounds phthiotriol and glycosylated phenolphthiotriol dimycoserosates to form phthiocerol dimycocerosates (DIM A) and glycosylated phenolphthiocerol dimycocerosates (PGL). The chain is Probable phthiotriol/phenolphthiotriol dimycocerosates methyltransferase 2 from Mycobacterium ulcerans (strain Agy99).